We begin with the raw amino-acid sequence, 322 residues long: Succinate/fumarate mitochondrial transporter (322 aa).

Solcar repeat units follow at residues 8–99 (SHPA…YRTL), 111–202 (GNTF…LKEF), and 212–303 (LPSW…VREH). 6 consecutive transmembrane segments (helical) span residues 11–31 (AINL…CHPL), 68–88 (FLAL…KMAI), 114–134 (FVAG…PMEV), 177–193 (GVSL…GANF), 219–235 (CIGL…NAPL), and 278–295 (GITP…VTFT).

Belongs to the mitochondrial carrier (TC 2.A.29) family.

It is found in the mitochondrion inner membrane. In terms of biological role, transports cytoplasmic succinate, derived from isocitrate by the action of isocitrate lyase in the cytosol, into the mitochondrial matrix in exchange for fumarate. This Saccharomyces cerevisiae (strain ATCC 204508 / S288c) (Baker's yeast) protein is Succinate/fumarate mitochondrial transporter (SFC1).